Reading from the N-terminus, the 277-residue chain is Protein OPG166 (277 aa).

2 N-linked (GlcNAc...) asparagine; by host glycosylation sites follow: asparagine 29 and asparagine 58. 5 helical membrane-spanning segments follow: residues 124 to 144, 156 to 176, 186 to 206, 219 to 239, and 247 to 267; these read TMLM…EIAY, GILQ…AFLF, IIGL…KVFS, LIIY…GLSL, and LLLS…LFLV.

It belongs to the orthopoxvirus OPG166 protein family.

The protein localises to the host membrane. In terms of biological role, promotes, when overexpressed, the influx of extracellular Ca(2+), leading to membrane permeability and host cell necrosis. This Cynomys gunnisoni (Gunnison's prairie dog) protein is Protein OPG166 (OPG166).